Consider the following 361-residue polypeptide: Chorismate synthase (361 aa).

NADP(+) is bound by residues Arg-48 and Arg-54. Residues 125-127 (RSS), 238-239 (NA), Gly-278, 293-297 (KPTSS), and Arg-319 contribute to the FMN site.

The protein belongs to the chorismate synthase family. In terms of assembly, homotetramer. FMNH2 is required as a cofactor.

The enzyme catalyses 5-O-(1-carboxyvinyl)-3-phosphoshikimate = chorismate + phosphate. Its pathway is metabolic intermediate biosynthesis; chorismate biosynthesis; chorismate from D-erythrose 4-phosphate and phosphoenolpyruvate: step 7/7. Catalyzes the anti-1,4-elimination of the C-3 phosphate and the C-6 proR hydrogen from 5-enolpyruvylshikimate-3-phosphate (EPSP) to yield chorismate, which is the branch point compound that serves as the starting substrate for the three terminal pathways of aromatic amino acid biosynthesis. This reaction introduces a second double bond into the aromatic ring system. This Salmonella arizonae (strain ATCC BAA-731 / CDC346-86 / RSK2980) protein is Chorismate synthase.